The sequence spans 192 residues: MADSQNQGSAEPSQAAAAAAAADAAAAAEEVMAEGGAQGGDSDSASSDSDGVVGQMAEEPQTPAENAPKPRNDFIESLPNSVKCRVLALKKLQKRCDKIEAKFDKEFQALEKKYNDIYKPLLAKIQELTGEMEGCAWTLEGDEEDDDDDEYEDEEEGEEEDEEEEEPAAEAAGTAAAKDEGPHSAVPDDAKK.

Polar residues predominate over residues 1–12 (MADSQNQGSAEP). A disordered region spans residues 1–76 (MADSQNQGSA…APKPRNDFIE (76 aa)). 2 stretches are compositionally biased toward low complexity: residues 15 to 28 (AAAAAAAADAAAAA) and 40 to 55 (GDSDSASSDSDGVVGQ). A coiled-coil region spans residues 86 to 112 (VLALKKLQKRCDKIEAKFDKEFQALEK). A disordered region spans residues 136–192 (AWTLEGDEEDDDDDEYEDEEEGEEEDEEEEEPAAEAAGTAAAKDEGPHSAVPDDAKK). Residues 140–168 (EGDEEDDDDDEYEDEEEGEEEDEEEEEPA) show a composition bias toward acidic residues. Residues 177-192 (AKDEGPHSAVPDDAKK) are compositionally biased toward basic and acidic residues.

Belongs to the nucleosome assembly protein (NAP) family.

It is found in the nucleus. The protein is Nucleosome assembly protein 1-like 5 (NAP1L5) of Bos taurus (Bovine).